Reading from the N-terminus, the 205-residue chain is COP9 signalosome complex subunit 7 (205 aa).

Residues 1 to 135 (MEEKISQAID…QTLHVSWALE (135 aa)) form the PCI domain. Ser183 is subject to Phosphoserine.

It belongs to the CSN7/EIF3M family. CSN7 subfamily. Component of the COP9 signalosome (CSN) complex.

Functionally, component of the COP9 signalosome (CSN) complex that acts as an regulator of the ubiquitin (Ubl) conjugation pathway by mediating the deneddylation of the cullin subunit of SCF-type E3 ubiquitin-protein ligase complexes. The protein is COP9 signalosome complex subunit 7 (csn71) of Schizosaccharomyces pombe (strain 972 / ATCC 24843) (Fission yeast).